A 316-amino-acid chain; its full sequence is CXXC-type zinc finger protein 5 (316 aa).

The segment covering 1–10 (MSSLGGGSQD) has biased composition (gly residues). Positions 1 to 95 (MSSLGGGSQD…SGGAGSMMGG (95 aa)) are disordered. 2 stretches are compositionally biased toward low complexity: residues 11 to 27 (AGGSSSSSNTSSSSGSG) and 36 to 50 (SATVAATAPASVADD). Residues 250–291 (GKKKRKRCGMCAPCRRRINCEQCSSCRNRKTGHQICKFRKCE) form a CXXC-type zinc finger. The Nuclear localization signal motif lies at 251–256 (KKKRKR). 8 residues coordinate Zn(2+): C257, C260, C263, C269, C272, C275, C285, and C290.

As to quaternary structure, interacts with DVL1. Interacts with RBPJ. As to expression, expressed in neural stem cells (at protein level). Expressed in the dorsal telencephalon.

It localises to the nucleus. The protein localises to the cytoplasm. Its function is as follows. May indirectly participate in activation of the NF-kappa-B and MAPK pathways. Required for DNA damage-induced ATM phosphorylation, p53 activation and cell cycle arrest. Involved in myelopoiesis. Acts as a mediator of BMP4-mediated modulation of canonical Wnt signaling activity in neural stem cells. Binds to the oxygen responsive element of COX4I2 and represses its transcription under hypoxia conditions (4% oxygen), as well as normoxia conditions (20% oxygen). May repress COX4I2 transactivation induced by CHCHD2 and RBPJ. Binds preferentially to DNA containing cytidine-phosphate-guanosine (CpG) dinucleotides over CpH (H=A, T, and C), hemimethylated-CpG and hemimethylated-hydroxymethyl-CpG. The sequence is that of CXXC-type zinc finger protein 5 (Cxxc5) from Rattus norvegicus (Rat).